A 968-amino-acid polypeptide reads, in one-letter code: Translation initiation factor IF-2 (968 aa).

Over residues 305–319 (KPAAAAGAPGAPGAA) the composition is skewed to low complexity. The segment at 305–376 (KPAAAAGAPG…NDRDARPEST (72 aa)) is disordered. One can recognise a tr-type G domain in the interval 468-635 (PRAPVVTVMG…QVLLQAEVLE (168 aa)). Residues 477 to 484 (GHVDHGKT) form a G1 region. 477 to 484 (GHVDHGKT) is a binding site for GTP. A G2 region spans residues 502–506 (GITQH). The interval 523–526 (DTPG) is G3. GTP is bound by residues 523 to 527 (DTPGH) and 577 to 580 (NKID). Positions 577–580 (NKID) are G4. The G5 stretch occupies residues 613 to 615 (SAR).

This sequence belongs to the TRAFAC class translation factor GTPase superfamily. Classic translation factor GTPase family. IF-2 subfamily.

The protein resides in the cytoplasm. Functionally, one of the essential components for the initiation of protein synthesis. Protects formylmethionyl-tRNA from spontaneous hydrolysis and promotes its binding to the 30S ribosomal subunits. Also involved in the hydrolysis of GTP during the formation of the 70S ribosomal complex. This chain is Translation initiation factor IF-2, found in Polaromonas sp. (strain JS666 / ATCC BAA-500).